The sequence spans 263 residues: Imidazole glycerol phosphate synthase subunit HisF (263 aa).

Active-site residues include Asp-11 and Asp-130.

This sequence belongs to the HisA/HisF family. In terms of assembly, heterodimer of HisH and HisF.

The protein localises to the cytoplasm. The catalysed reaction is 5-[(5-phospho-1-deoxy-D-ribulos-1-ylimino)methylamino]-1-(5-phospho-beta-D-ribosyl)imidazole-4-carboxamide + L-glutamine = D-erythro-1-(imidazol-4-yl)glycerol 3-phosphate + 5-amino-1-(5-phospho-beta-D-ribosyl)imidazole-4-carboxamide + L-glutamate + H(+). Its pathway is amino-acid biosynthesis; L-histidine biosynthesis; L-histidine from 5-phospho-alpha-D-ribose 1-diphosphate: step 5/9. Functionally, IGPS catalyzes the conversion of PRFAR and glutamine to IGP, AICAR and glutamate. The HisF subunit catalyzes the cyclization activity that produces IGP and AICAR from PRFAR using the ammonia provided by the HisH subunit. The protein is Imidazole glycerol phosphate synthase subunit HisF of Synechococcus sp. (strain CC9311).